A 339-amino-acid chain; its full sequence is Phenylalanine--tRNA ligase alpha subunit (339 aa).

Glu262 provides a ligand contact to Mg(2+).

This sequence belongs to the class-II aminoacyl-tRNA synthetase family. Phe-tRNA synthetase alpha subunit type 1 subfamily. In terms of assembly, tetramer of two alpha and two beta subunits. Mg(2+) is required as a cofactor.

The protein localises to the cytoplasm. The catalysed reaction is tRNA(Phe) + L-phenylalanine + ATP = L-phenylalanyl-tRNA(Phe) + AMP + diphosphate + H(+). The protein is Phenylalanine--tRNA ligase alpha subunit of Neisseria gonorrhoeae (strain ATCC 700825 / FA 1090).